Consider the following 116-residue polypeptide: Large ribosomal subunit protein bL17 (116 aa).

This sequence belongs to the bacterial ribosomal protein bL17 family. In terms of assembly, part of the 50S ribosomal subunit. Contacts protein L32.

The protein is Large ribosomal subunit protein bL17 of Prochlorococcus marinus (strain MIT 9301).